Reading from the N-terminus, the 822-residue chain is Fibroblast growth factor receptor 4 (822 aa).

The first 35 residues, 1 to 35 (MGVQKDSRDIRWNRTTRPLALLLCGLLAFSALSCA), serve as a signal peptide directing secretion. N-linked (GlcNAc...) asparagine glycans are attached at residues asparagine 13, asparagine 72, and asparagine 125. Over 36 to 388 (RTLPEGRKAN…AEGPETRYTD (353 aa)) the chain is Extracellular. Ig-like C2-type domains are found at residues 39 to 129 (PEGR…FTIS), 157 to 259 (PPYS…YLLD), and 268 to 368 (PILQ…AWLT). A disulfide bond links cysteine 69 and cysteine 114. The disordered stretch occupies residues 136-166 (SGDDDDEDHGREDSAGDMGEDPPYSTSYRAP). The cysteines at positions 191 and 243 are disulfide-linked. 5 N-linked (GlcNAc...) asparagine glycosylation sites follow: asparagine 240, asparagine 277, asparagine 309, asparagine 330, and asparagine 341. A disulfide bridge links cysteine 290 with cysteine 352. Residues 389 to 409 (IIIYTSGSLALLMAAVIVVLC) traverse the membrane as a helical segment. At 410–822 (RMQLPPTKTH…HHTTTSMVGT (413 aa)) the chain is on the cytoplasmic side. The region spanning 486–774 (LVLGKPLGEG…ILATVAEEYL (289 aa)) is the Protein kinase domain. ATP-binding positions include 492 to 500 (LGEGCFGQV) and lysine 522. Residue aspartate 631 is the Proton acceptor of the active site. Phosphotyrosine; by autocatalysis is present on residues tyrosine 661, tyrosine 662, and tyrosine 773.

Belongs to the protein kinase superfamily. Tyr protein kinase family. Fibroblast growth factor receptor subfamily. Ubiquitinated. Subject to proteasomal degradation when not fully glycosylated. Post-translationally, autophosphorylated. Binding of FGF family members together with heparan sulfate proteoglycan or heparin promotes receptor dimerization and autophosphorylation on tyrosine residues. Autophosphorylation occurs in trans between the two FGFR molecules present in the dimer.

Its subcellular location is the cell membrane. It localises to the endosome. It is found in the endoplasmic reticulum. It catalyses the reaction L-tyrosyl-[protein] + ATP = O-phospho-L-tyrosyl-[protein] + ADP + H(+). Present in an inactive conformation in the absence of bound ligand. Ligand binding leads to dimerization and activation by autophosphorylation on tyrosine residues. Functionally, tyrosine-protein kinase that acts as a cell-surface receptor for fibroblast growth factors and plays a role in the regulation of cell proliferation, differentiation and migration, and in regulation of lipid metabolism, bile acid biosynthesis, glucose uptake, vitamin D metabolism and phosphate homeostasis. Required for normal down-regulation of the expression of CYP7A1, the rate-limiting enzyme in bile acid synthesis, in response to FGF19. Phosphorylates PLCG1 and FRS2. Ligand binding leads to the activation of several signaling cascades. Activation of PLCG1 leads to the production of the cellular signaling molecules diacylglycerol and inositol 1,4,5-trisphosphate. Phosphorylation of FRS2 triggers recruitment of GRB2, GAB1, PIK3R1 and SOS1, and mediates activation of RAS, MAPK1/ERK2, MAPK3/ERK1 and the MAP kinase signaling pathway, as well as of the AKT1 signaling pathway. In Pleurodeles waltl (Iberian ribbed newt), this protein is Fibroblast growth factor receptor 4 (FGFR4).